The sequence spans 286 residues: Aquaporin PIP1-3 (286 aa).

Met1 carries the post-translational modification N-acetylmethionine. Residues 1–33 form a disordered region; it reads MEGKEEDVRVGANKFPERQPIGTSAQTDKDYKE. The Cytoplasmic segment spans residues 1–54; it reads MEGKEEDVRVGANKFPERQPIGTSAQTDKDYKEPPPAPFFEPGELSSWSFYRAG. A helical membrane pass occupies residues 55-75; it reads IAEFIATFLFLYITVLTVMGV. At 76–81 the chain is on the extracellular side; sequence KRAPNM. A helical membrane pass occupies residues 82 to 102; that stretch reads CASVGIQGIAWAFGGMIFALV. Over 103–132 the chain is Cytoplasmic; the sequence is YCTAGISGGHINPAVTFGLFLARKLSLTRA. The NPA 1 motif lies at 114 to 116; that stretch reads NPA. Residues 133–153 form a helical membrane-spanning segment; it reads VFYIVMQCLGAICGAGVVKGF. Residues 154–174 lie on the Extracellular side of the membrane; the sequence is QPNPYQTLGGGANTVAHGYTK. Residues 175 to 195 form a helical membrane-spanning segment; the sequence is GSGLGAEIIGTFVLVYTVFSA. Over 196–208 the chain is Cytoplasmic; it reads TDAKRSARDSHVP. Residues 209 to 229 traverse the membrane as a helical segment; it reads ILAPLPIGFAVFLVHLATIPI. Residues 230-256 lie on the Extracellular side of the membrane; the sequence is TGTGINPARSLGAAIIYNKDHAWDDHW. Residues 235 to 237 carry the NPA 2 motif; that stretch reads NPA. The chain crosses the membrane as a helical span at residues 257–277; the sequence is IFWVGPFIGAALAALYHQLVI. The Cytoplasmic portion of the chain corresponds to 278–286; it reads RAIPFKSRS. At Ser284 the chain carries Phosphoserine.

Belongs to the MIP/aquaporin (TC 1.A.8) family. PIP (TC 1.A.8.11) subfamily. In terms of tissue distribution, expressed in roots, above ground, ripening fruit, flower buds, green siliques and senescing leaves.

Its subcellular location is the cell membrane. Its function is as follows. Water channel required to facilitate the transport of water across cell membrane. Its function is impaired by Hg(2+). The chain is Aquaporin PIP1-3 (PIP1-3) from Arabidopsis thaliana (Mouse-ear cress).